Consider the following 289-residue polypeptide: Mitochondrial fission regulator 1-like (289 aa).

Threonine 27 bears the Phosphothreonine mark. A phosphoserine mark is found at serine 38, serine 100, serine 107, serine 221, serine 222, serine 235, serine 258, and serine 270.

It belongs to the MTFR1 family. Phosphorylated by AMPK. Upon stress, phosphorylation by AMPK is sufficient to induce mitochondrial fragmentation.

The protein resides in the mitochondrion outer membrane. In terms of biological role, mitochondrial protein required for adaptation of miochondrial dynamics to metabolic changes. Regulates mitochondrial morphology at steady state and mediates AMPK-dependent stress-induced mitochondrial fragmentation via the control of OPA1 levels. This chain is Mitochondrial fission regulator 1-like (Mtfr1l), found in Rattus norvegicus (Rat).